Reading from the N-terminus, the 89-residue chain is Conotoxin Bu5 (89 aa).

The first 22 residues, 1 to 22 (MKLTCVLIVAVLFLTACQLATA), serve as a signal peptide directing secretion. Residues 23-49 (ENSREEQGYSAVRSSDQIQDSDLKLTK) constitute a propeptide that is removed on maturation. Disulfide bonds link Cys-51/Cys-66, Cys-58/Cys-70, and Cys-65/Cys-79. Cys-79 bears the Cysteine amide mark. Positions 80-89 (GVSIDYYDSR) are excised as a propeptide.

This sequence belongs to the conotoxin O1 superfamily. In terms of tissue distribution, expressed by the venom duct.

It is found in the secreted. This Conus bullatus (Bubble cone) protein is Conotoxin Bu5.